Consider the following 89-residue polypeptide: Small ribosomal subunit protein uS15 (89 aa).

It belongs to the universal ribosomal protein uS15 family. As to quaternary structure, part of the 30S ribosomal subunit. Forms a bridge to the 50S subunit in the 70S ribosome, contacting the 23S rRNA.

Functionally, one of the primary rRNA binding proteins, it binds directly to 16S rRNA where it helps nucleate assembly of the platform of the 30S subunit by binding and bridging several RNA helices of the 16S rRNA. Forms an intersubunit bridge (bridge B4) with the 23S rRNA of the 50S subunit in the ribosome. This Vibrio vulnificus (strain YJ016) protein is Small ribosomal subunit protein uS15.